Consider the following 208-residue polypeptide: Small ribosomal subunit protein uS4 (208 aa).

Positions 98 to 161 (QRLDNVVYRM…KTNSQILRAI (64 aa)) constitute an S4 RNA-binding domain.

This sequence belongs to the universal ribosomal protein uS4 family. As to quaternary structure, part of the 30S ribosomal subunit. Contacts protein S5. The interaction surface between S4 and S5 is involved in control of translational fidelity.

In terms of biological role, one of the primary rRNA binding proteins, it binds directly to 16S rRNA where it nucleates assembly of the body of the 30S subunit. Its function is as follows. With S5 and S12 plays an important role in translational accuracy. This Sulfurovum sp. (strain NBC37-1) protein is Small ribosomal subunit protein uS4.